Here is a 367-residue protein sequence, read N- to C-terminus: Porin Omp2a (367 aa).

Residues 1–22 (MNIKSLLLGSAAALVAASGAQA) form the signal peptide.

It belongs to the alphaproteobacteria porin family. In terms of assembly, monomer.

Its subcellular location is the cell outer membrane. Forms passive diffusion pores that allow small molecular weight hydrophilic materials across the outer membrane. The chain is Porin Omp2a (omp2a) from Brucella suis.